Here is a 110-residue protein sequence, read N- to C-terminus: Large ribosomal subunit protein uL22 (110 aa).

It belongs to the universal ribosomal protein uL22 family. In terms of assembly, part of the 50S ribosomal subunit.

Its function is as follows. This protein binds specifically to 23S rRNA; its binding is stimulated by other ribosomal proteins, e.g. L4, L17, and L20. It is important during the early stages of 50S assembly. It makes multiple contacts with different domains of the 23S rRNA in the assembled 50S subunit and ribosome. In terms of biological role, the globular domain of the protein is located near the polypeptide exit tunnel on the outside of the subunit, while an extended beta-hairpin is found that lines the wall of the exit tunnel in the center of the 70S ribosome. In Alkaliphilus oremlandii (strain OhILAs) (Clostridium oremlandii (strain OhILAs)), this protein is Large ribosomal subunit protein uL22.